A 405-amino-acid chain; its full sequence is Insertion element IS110 uncharacterized 43.6 kDa protein (405 aa).

This chain is Insertion element IS110 uncharacterized 43.6 kDa protein, found in Streptomyces coelicolor (strain ATCC BAA-471 / A3(2) / M145).